The chain runs to 291 residues: Homoserine kinase (291 aa).

80 to 90 is an ATP binding site; that stretch reads RPASGLGSSAA.

This sequence belongs to the GHMP kinase family. Homoserine kinase subfamily.

The protein localises to the cytoplasm. It carries out the reaction L-homoserine + ATP = O-phospho-L-homoserine + ADP + H(+). It participates in amino-acid biosynthesis; L-threonine biosynthesis; L-threonine from L-aspartate: step 4/5. Functionally, catalyzes the ATP-dependent phosphorylation of L-homoserine to L-homoserine phosphate. The chain is Homoserine kinase from Haloarcula marismortui (strain ATCC 43049 / DSM 3752 / JCM 8966 / VKM B-1809) (Halobacterium marismortui).